The primary structure comprises 224 residues: Prophage repressor CohE (224 aa).

The protein is Prophage repressor CohE (cohE) of Escherichia coli (strain K12).